Consider the following 176-residue polypeptide: Tubulin polymerization-promoting protein family member 3 (176 aa).

The disordered stretch occupies residues 126–152 (TDTSKYTGSHKERFDESGKGKGKGGRE). The segment covering 134 to 152 (SHKERFDESGKGKGKGGRE) has biased composition (basic and acidic residues).

The protein belongs to the TPPP family.

Its subcellular location is the cytoplasm. The protein localises to the cytoskeleton. Functionally, regulator of microtubule dynamic that has microtubule bundling activity. The protein is Tubulin polymerization-promoting protein family member 3 (tppp3) of Xenopus tropicalis (Western clawed frog).